The sequence spans 355 residues: Erythronate-4-phosphate dehydrogenase (355 aa).

Residues serine 45 and threonine 66 each contribute to the substrate site. Aspartate 146 provides a ligand contact to NAD(+). The active site involves arginine 206. Aspartate 229 lines the NAD(+) pocket. The active site involves glutamate 234. Histidine 251 functions as the Proton donor in the catalytic mechanism. Glycine 254 is a binding site for NAD(+). Tyrosine 255 contributes to the substrate binding site.

Belongs to the D-isomer specific 2-hydroxyacid dehydrogenase family. PdxB subfamily. Homodimer.

It localises to the cytoplasm. The catalysed reaction is 4-phospho-D-erythronate + NAD(+) = (R)-3-hydroxy-2-oxo-4-phosphooxybutanoate + NADH + H(+). It participates in cofactor biosynthesis; pyridoxine 5'-phosphate biosynthesis; pyridoxine 5'-phosphate from D-erythrose 4-phosphate: step 2/5. Its function is as follows. Catalyzes the oxidation of erythronate-4-phosphate to 3-hydroxy-2-oxo-4-phosphonooxybutanoate. This is Erythronate-4-phosphate dehydrogenase from Acinetobacter baumannii (strain ACICU).